We begin with the raw amino-acid sequence, 180 residues long: Translation initiation factor IF-3 (180 aa).

It belongs to the IF-3 family. As to quaternary structure, monomer.

The protein localises to the cytoplasm. Functionally, IF-3 binds to the 30S ribosomal subunit and shifts the equilibrium between 70S ribosomes and their 50S and 30S subunits in favor of the free subunits, thus enhancing the availability of 30S subunits on which protein synthesis initiation begins. In Salmonella typhimurium (strain LT2 / SGSC1412 / ATCC 700720), this protein is Translation initiation factor IF-3.